A 116-amino-acid polypeptide reads, in one-letter code: Non-specific lipid-transfer protein (116 aa).

Residues 1–25 (MAKMAMMVLCAGVTCMVVGAPYTEA) form the signal peptide. Cystine bridges form between Cys-28-Cys-75, Cys-38-Cys-52, Cys-53-Cys-98, and Cys-73-Cys-112.

This sequence belongs to the plant LTP family.

Functionally, plant non-specific lipid-transfer proteins transfer phospholipids as well as galactolipids across membranes. May play a role in wax or cutin deposition in the cell walls of expanding epidermal cells and certain secretory tissues. This chain is Non-specific lipid-transfer protein, found in Helianthus annuus (Common sunflower).